Consider the following 455-residue polypeptide: Phosphoglucosamine mutase (455 aa).

The active-site Phosphoserine intermediate is the serine 108. The Mg(2+) site is built by serine 108, aspartate 246, aspartate 248, and aspartate 250. Position 108 is a phosphoserine (serine 108).

This sequence belongs to the phosphohexose mutase family. Mg(2+) serves as cofactor. Activated by phosphorylation.

It carries out the reaction alpha-D-glucosamine 1-phosphate = D-glucosamine 6-phosphate. In terms of biological role, catalyzes the conversion of glucosamine-6-phosphate to glucosamine-1-phosphate. The chain is Phosphoglucosamine mutase from Frankia casuarinae (strain DSM 45818 / CECT 9043 / HFP020203 / CcI3).